The chain runs to 210 residues: Ribosomal RNA small subunit methyltransferase G (210 aa).

S-adenosyl-L-methionine is bound by residues glycine 77, phenylalanine 82, 100 to 102 (ERS), 128 to 129 (VE), and arginine 141.

It belongs to the methyltransferase superfamily. RNA methyltransferase RsmG family.

The protein resides in the cytoplasm. Functionally, specifically methylates the N7 position of a guanine in 16S rRNA. In Borrelia duttonii (strain Ly), this protein is Ribosomal RNA small subunit methyltransferase G.